Here is a 407-residue protein sequence, read N- to C-terminus: Phosphoglycerate kinase (407 aa).

Substrate-binding positions include 27-29, Arg43, 66-69, Arg125, and Arg165; these read DLN and HLGR. Residues Lys215, Gly303, Glu334, and 363–366 contribute to the ATP site; that span reads GGDS.

This sequence belongs to the phosphoglycerate kinase family. Monomer.

It is found in the cytoplasm. The enzyme catalyses (2R)-3-phosphoglycerate + ATP = (2R)-3-phospho-glyceroyl phosphate + ADP. It functions in the pathway carbohydrate degradation; glycolysis; pyruvate from D-glyceraldehyde 3-phosphate: step 2/5. In Mycobacterium sp. (strain JLS), this protein is Phosphoglycerate kinase.